The primary structure comprises 476 residues: Protein THYLAKOID RHODANESE-LIKE, chloroplastic (476 aa).

The transit peptide at 1-21 directs the protein to the chloroplast; it reads MAATTTILSSAAPTPLTAPPR. Residues 1–29 are disordered; sequence MAATTTILSSAAPTPLTAPPRARARAPAA. A compositionally biased stretch (low complexity) spans 11–21; sequence AAPTPLTAPPR. Residues 22 to 58 constitute a thylakoid transit peptide; sequence ARARAPAARRRRLRARDILGAALGLANGGASAALAAP. A helical transmembrane segment spans residues 100–120; that stretch reads LVAAAGVAAVALPLVLAQVLG. The region spanning 140-246 is the Rhodanese domain; sequence EEPGAQLVDI…WLSSSLPWTA (107 aa). 2 helical membrane-spanning segments follow: residues 264–284 and 287–307; these read LPVT…YTEI and VLQF…LIYA. The interval 342–476 is disordered; it reads LPSTGTKSQP…PPSSPSPSAP (135 aa). The span at 351-389 shows a compositional bias: low complexity; that stretch reads PAITEAAPATAEAAPAAATATAAPPAAPVEETSTEAAPA. A compositionally biased stretch (pro residues) spans 403–412; the sequence is LKPPSSPSPL. Positions 425 to 446 are enriched in low complexity; that stretch reads ESAATESAPAVNSAPVAEAAPE. A compositionally biased stretch (pro residues) spans 447–476; it reads AAPPAAPRPLSPYPNYPDLKPPSSPSPSAP.

As to quaternary structure, component of high molecular weight thylakoid LFNRs-containing protein complexes containing LIR1, LFNR1, LFNR2, TIC62 and TROL proteins.

It localises to the plastid. The protein localises to the chloroplast thylakoid membrane. Functionally, rhodanese domain-containing protein required for anchoring ferredoxin--NADP reductase to the thylakoid membranes and sustaining efficient linear electron flow (LEF). The chain is Protein THYLAKOID RHODANESE-LIKE, chloroplastic from Oryza sativa subsp. indica (Rice).